A 139-amino-acid chain; its full sequence is Putative nickel-responsive regulator (139 aa).

Positions 79, 90, 92, and 98 each coordinate Ni(2+).

Belongs to the transcriptional regulatory CopG/NikR family. The cofactor is Ni(2+).

Transcriptional regulator. The sequence is that of Putative nickel-responsive regulator from Nitratidesulfovibrio vulgaris (strain ATCC 29579 / DSM 644 / CCUG 34227 / NCIMB 8303 / VKM B-1760 / Hildenborough) (Desulfovibrio vulgaris).